The following is a 342-amino-acid chain: Phomopsin biosynthesis cluster protein B' (342 aa).

A disordered region spans residues 1-22 (MESIAKAKSLPNKGRTYDSQRP). The chain crosses the membrane as a helical span at residues 87 to 107 (VLIIGCAVISLFAIIGALGFA). Positions 118-186 (CASPAHQNPH…QCGESPDEAQ (69 aa)) are disordered. A compositionally biased stretch (low complexity) spans 144–155 (HSGSHSSSSSTN). A glycan (N-linked (GlcNAc...) asparagine) is linked at N248.

It is found in the membrane. Functionally, part of the gene cluster that mediates the biosynthesis of the phomopsins, a group of hexapeptide mycotoxins which infects lupins and causes lupinosis disease in livestock. The role of phomB' within the phomopsins biosynthesis pathway has still to be determined. The pathway starts with the processing of the precursor phomA by several endopeptidases including kexin proteases as well as the cluster-specific S41 family peptidase phomP1 and the oligopeptidase phomG to produce 10 identical copies of the hexapeptide Tyr-Val-Ile-Pro-Ile-Asp. After being excised from the precursor peptide, the core peptides are cyclized and modified post-translationally by enzymes encoded within the gene cluster. The timing and order of proteolysis of the phomA precursor and PTMs are still unknown. Two tyrosinase-like enzymes, phomQ1 and phomQ2, catalyze the chlorination and hydroxylation of Tyr, respectively. PhomYb, is proposed to be involved in the construction of the macrocyclic structure. The other 4 ustYa family proteins may be involved in PTMs that generate the unique structure of phomopsin A. PhomYa is required for the hydroxylation of C-beta of Tyr. PhomYc, phomYd, and phomYe are responsible for the biosynthesis of 2,3-dehydroisoleucine (dIle), 2,3-dehydroaspartic acid (dAsp), and 3,4-dehydroproline (dPro), respectively. While dIle formation by phomYc is indispensable for the installation of dAsp by phomYd, the order of the other PTMs have not been elucidated yet. Most of the biosynthetic enzymes likely have broad substrate specificity, and thus, there might be a metabolic grid from a precursor to phomopsin A. The enzyme(s) responsible for the biosynthesis of 3,4-dehydrovaline (dVal) have also not been identified yet. Finally, phomM acts as an S-adenosylmethionine-dependent alpha-N-methyltransferase that catalyzes two successive N-methylation reactions, converting N-desmethyl-phomopsin A to phomopsin A and phomopsin A further to an N,N-dimethylated congener called phomopsin E. The protein is Phomopsin biosynthesis cluster protein B' of Diaporthe leptostromiformis (Lupinosis disease fungus).